A 216-amino-acid chain; its full sequence is Probable nicotinate-nucleotide adenylyltransferase (216 aa).

Belongs to the NadD family.

The catalysed reaction is nicotinate beta-D-ribonucleotide + ATP + H(+) = deamido-NAD(+) + diphosphate. The protein operates within cofactor biosynthesis; NAD(+) biosynthesis; deamido-NAD(+) from nicotinate D-ribonucleotide: step 1/1. Catalyzes the reversible adenylation of nicotinate mononucleotide (NaMN) to nicotinic acid adenine dinucleotide (NaAD). The sequence is that of Probable nicotinate-nucleotide adenylyltransferase from Shewanella baltica (strain OS223).